Reading from the N-terminus, the 1881-residue chain is Kinesin-like protein KIF26A (1881 aa).

Disordered stretches follow at residues 20 to 66 (PARE…AGGG), 145 to 193 (PASH…PPGP), and 309 to 330 (ASKRKKHHPPPAPSTRGTSTYP). Serine 30 carries the phosphoserine modification. Residues 364–718 (KVKVMLRIWP…VQLAARIHRL (355 aa)) enclose the Kinesin motor domain. 462–469 (GHMSLGKS) is an ATP binding site. 8 disordered regions span residues 718-778 (LRRK…SSEQ), 794-827 (SDRELTDNEGPPDFVPIIPALSRRRPSEGPRDAD), 846-982 (GSEA…QAAL), 1078-1104 (YTSQMSEGPGDPGEFPEGTAWAGGSPA), 1118-1266 (LSES…PRLP), 1328-1425 (SGSL…PYRP), 1442-1633 (SKVR…SGEL), and 1652-1698 (YESM…TGLQ). Residues 742–751 (RRPPHLRPFH) show a composition bias toward basic residues. A compositionally biased stretch (basic and acidic residues) spans 818–827 (RPSEGPRDAD). Residues 905–915 (SDPSKTGTQSE) show a composition bias toward polar residues. Over residues 940–950 (LPSPAPPPPRQ) the composition is skewed to pro residues. Over residues 1084-1095 (EGPGDPGEFPEG) the composition is skewed to low complexity. Over residues 1151–1162 (EESKVRSSECGR) the composition is skewed to basic and acidic residues. Position 1257 is a phosphoserine (serine 1257). Low complexity predominate over residues 1328–1353 (SGSLKTTSGSKKSVSPKGAFFPRPSG). Residues 1366–1378 (LEQSTALTPTQAL) show a composition bias toward polar residues. The segment covering 1390 to 1399 (RGEEEARPSG) has biased composition (basic and acidic residues). The segment covering 1400-1412 (RSDSSVPKATSSL) has biased composition (polar residues). Composition is skewed to low complexity over residues 1477-1489 (PAKGVGATKPPAG), 1524-1537 (PGPRAAPRAVPGIG), and 1575-1587 (WGSTDSDSGNDSG). The segment covering 1616–1629 (RYSSGHGSDNSSVL) has biased composition (polar residues). Residue serine 1654 is modified to Phosphoserine. Positions 1664–1675 (SASSAPDSMSES) are enriched in low complexity. A compositionally biased stretch (basic residues) spans 1685–1698 (RSLKSPKKRATGLQ). Residues 1780-1812 (LRLAERRQQRLQEVQAKRDHLCEELAETQGRLM) are a coiled coil.

The protein belongs to the TRAFAC class myosin-kinesin ATPase superfamily. Kinesin family. KIF26 subfamily. As to quaternary structure, interacts with GRB2 (via SH2 domain). As to expression, expressed in several neuronal populations.

The protein resides in the cytoplasm. The protein localises to the cytoskeleton. Its function is as follows. Atypical kinesin that plays a key role in enteric neuron development. Acts by repressing a cell growth signaling pathway in the enteric nervous system development, possibly via its interaction with GRB2 that prevents GRB2-binding to SHC, thereby attenating the GDNF-Ret signaling. Binds to microtubules but lacks microtubule-based motility due to the absence of ATPase activity. Plays a critical role in cerebral cortical development. It probably acts as a microtubule stabilizer that regulates neurite growth and radial migration of cortical excitatory neurons. In Mus musculus (Mouse), this protein is Kinesin-like protein KIF26A (Kif26a).